A 547-amino-acid chain; its full sequence is 4-coumarate-CoA ligase 1 (547 aa).

Residues 190–194, His238, 310–312, 332–333, Thr337, Asp421, Arg436, and Lys527 each bind ATP; these read SSGTT, AAP, and QG. The tract at residues 263-332 is SBD1; the sequence is EIVRLMELVE…EKLPNAKLGQ (70 aa). Residues 333–400 form an SBD2 region; that stretch reads GYGMTEAGPV…IRGNQIMKGY (68 aa).

This sequence belongs to the ATP-dependent AMP-binding enzyme family. In terms of tissue distribution, mostly expressed in stems, and, to a lower extent, in bulbs.

It carries out the reaction (E)-4-coumarate + ATP + CoA = (E)-4-coumaroyl-CoA + AMP + diphosphate. The protein operates within phytoalexin biosynthesis; 3,4',5-trihydroxystilbene biosynthesis; 3,4',5-trihydroxystilbene from trans-4-coumarate: step 1/2. In terms of biological role, produces CoA thioesters of a variety of hydroxy- and methoxy-substituted cinnamic acids, which are used to synthesize several phenylpropanoid-derived compounds, including anthocyanins, flavonoids, isoflavonoids, coumarins, lignin, suberin and wall-bound phenolics. This chain is 4-coumarate-CoA ligase 1, found in Narcissus pseudonarcissus (Daffodil).